The primary structure comprises 72 residues: NAD(P)H-quinone oxidoreductase subunit O (72 aa).

The protein belongs to the complex I NdhO subunit family. As to quaternary structure, NDH-1 can be composed of about 15 different subunits; different subcomplexes with different compositions have been identified which probably have different functions.

The protein resides in the cellular thylakoid membrane. It catalyses the reaction a plastoquinone + NADH + (n+1) H(+)(in) = a plastoquinol + NAD(+) + n H(+)(out). The enzyme catalyses a plastoquinone + NADPH + (n+1) H(+)(in) = a plastoquinol + NADP(+) + n H(+)(out). Its function is as follows. NDH-1 shuttles electrons from an unknown electron donor, via FMN and iron-sulfur (Fe-S) centers, to quinones in the respiratory and/or the photosynthetic chain. The immediate electron acceptor for the enzyme in this species is believed to be plastoquinone. Couples the redox reaction to proton translocation, and thus conserves the redox energy in a proton gradient. Cyanobacterial NDH-1 also plays a role in inorganic carbon-concentration. This chain is NAD(P)H-quinone oxidoreductase subunit O, found in Synechococcus elongatus (strain ATCC 33912 / PCC 7942 / FACHB-805) (Anacystis nidulans R2).